Reading from the N-terminus, the 493-residue chain is Glutamyl-tRNA(Gln) amidotransferase subunit A (493 aa).

Residues Lys78 and Ser158 each act as charge relay system in the active site. The active-site Acyl-ester intermediate is the Ser182.

This sequence belongs to the amidase family. GatA subfamily. Heterotrimer of A, B and C subunits.

It catalyses the reaction L-glutamyl-tRNA(Gln) + L-glutamine + ATP + H2O = L-glutaminyl-tRNA(Gln) + L-glutamate + ADP + phosphate + H(+). Allows the formation of correctly charged Gln-tRNA(Gln) through the transamidation of misacylated Glu-tRNA(Gln) in organisms which lack glutaminyl-tRNA synthetase. The reaction takes place in the presence of glutamine and ATP through an activated gamma-phospho-Glu-tRNA(Gln). This chain is Glutamyl-tRNA(Gln) amidotransferase subunit A, found in Rickettsia rickettsii (strain Iowa).